Reading from the N-terminus, the 513-residue chain is Xylose import ATP-binding protein XylG (513 aa).

ABC transporter domains are found at residues 5–242 (LEMK…VGRE) and 259–505 (LRIE…LRSE). 37–44 (GENGSGKS) provides a ligand contact to ATP.

The protein belongs to the ABC transporter superfamily. Xylose importer (TC 3.A.1.2.4) family. As to quaternary structure, the complex is composed of two ATP-binding proteins (XylG), two transmembrane proteins (XylH) and a solute-binding protein (XylF).

The protein localises to the cell inner membrane. The catalysed reaction is D-xylose(out) + ATP + H2O = D-xylose(in) + ADP + phosphate + H(+). In terms of biological role, part of the ABC transporter complex XylFGH involved in xylose import. Responsible for energy coupling to the transport system. The XylFGH system can also transport ribose in absence of xylose. In Escherichia coli (strain K12), this protein is Xylose import ATP-binding protein XylG.